A 186-amino-acid polypeptide reads, in one-letter code: Peptidyl-tRNA hydrolase (186 aa).

Residue Y14 participates in tRNA binding. Catalysis depends on H19, which acts as the Proton acceptor. Y61, N63, and N107 together coordinate tRNA.

The protein belongs to the PTH family. As to quaternary structure, monomer.

It localises to the cytoplasm. It carries out the reaction an N-acyl-L-alpha-aminoacyl-tRNA + H2O = an N-acyl-L-amino acid + a tRNA + H(+). Its function is as follows. Hydrolyzes ribosome-free peptidyl-tRNAs (with 1 or more amino acids incorporated), which drop off the ribosome during protein synthesis, or as a result of ribosome stalling. In terms of biological role, catalyzes the release of premature peptidyl moieties from peptidyl-tRNA molecules trapped in stalled 50S ribosomal subunits, and thus maintains levels of free tRNAs and 50S ribosomes. The polypeptide is Peptidyl-tRNA hydrolase (Helicobacter pylori (strain HPAG1)).